A 122-amino-acid polypeptide reads, in one-letter code: Large ribosomal subunit protein uL14c (122 aa).

This sequence belongs to the universal ribosomal protein uL14 family. In terms of assembly, part of the 50S ribosomal subunit.

The protein localises to the plastid. It is found in the chloroplast. Its function is as follows. Binds to 23S rRNA. This is Large ribosomal subunit protein uL14c from Calycanthus floridus var. glaucus (Eastern sweetshrub).